A 2429-amino-acid polypeptide reads, in one-letter code: Highly reducing polyketide synthase acrA (2429 aa).

A Ketosynthase family 3 (KS3) domain is found at 4–436; it reads PEPIAIVGMG…GTNAHAIIES (433 aa). Active-site for beta-ketoacyl synthase activity residues include cysteine 177, histidine 314, and histidine 356. The segment at 541 to 861 is malonyl-CoA:ACP transacylase (MAT) domain; it reads VFTGQGAQWP…PYSGTLSRGQ (321 aa). The segment at 931–1068 is N-terminal hotdog fold; the sequence is HPLLGVRSTE…GTVRVVLGPA (138 aa). The dehydratase (DH) domain stretch occupies residues 931–1229; it reads HPLLGVRSTE…RCSSLTPPGP (299 aa). The region spanning 931–1230 is the PKS/mFAS DH domain; that stretch reads HPLLGVRSTE…CSSLTPPGPR (300 aa). Residue histidine 963 is the Proton acceptor; for dehydratase activity of the active site. The interval 1082 to 1230 is C-terminal hotdog fold; sequence VFHEVKTERF…CSSLTPPGPR (149 aa). Aspartate 1141 serves as the catalytic Proton donor; for dehydratase activity. The tract at residues 1388-1577 is methyltransferase (MT) domain; the sequence is NGYMGRVAGQ…VNDFVDESKY (190 aa). Positions 2065–2235 are ketoreductase (KR) domain; it reads TYLLVGCTGG…ARGLAASVFH (171 aa). Positions 2351-2428 constitute a Carrier domain; that stretch reads EVDGVIQEAF…ELCREAASEV (78 aa). Serine 2388 carries the post-translational modification O-(pantetheine 4'-phosphoryl)serine.

It functions in the pathway secondary metabolite biosynthesis. Highly reducing polyketide synthase; part of the cluster that mediates the biosynthesis of acurin A, a highly reduced polyketide coupled to a serine via a peptide bond. The activities of the highly reducing polyketide synthase acrA and the nonribosomal peptide synthetase acrB are collectively responsible for the synthesis of the acurin A core structure with a heptaketide backbone produced by acrA covalently fused to a L-serine by acrB. After the formation of the PK-NRP hybrid product, it is detached from acrB by reductive release to set up the formation of the lactam ring by aldol condensation. The hydrolyase acrC then catalyzes water loss to generate a double bond in the ring. This double bond is probably reduced, which is followed by three oxidations at C-22 to generate the carboxylic acid moiety, involving probably the FAD-binding monooxygenase acrE and the cytochrome P450 monooxygenases acrD and acrF. Finally, a last methylation step performed by the O-methyltransferase acrG leads to the production of acurin A. The protein is Highly reducing polyketide synthase acrA of Aspergillus aculeatus (strain ATCC 16872 / CBS 172.66 / WB 5094).